The primary structure comprises 253 residues: Ditrans,polycis-undecaprenyl-diphosphate synthase ((2E,6E)-farnesyl-diphosphate specific) (253 aa).

Aspartate 26 is an active-site residue. Aspartate 26 is a Mg(2+) binding site. Substrate-binding positions include glycine 27 to arginine 30, tryptophan 31, arginine 39, histidine 43, and serine 71 to glutamate 73. The active-site Proton acceptor is the asparagine 74. Residues tryptophan 75, arginine 77, and arginine 194 each contribute to the substrate site. Residue histidine 199 coordinates Mg(2+). Arginine 200–serine 202 contributes to the substrate binding site. Residue glutamate 213 coordinates Mg(2+).

Belongs to the UPP synthase family. In terms of assembly, homodimer. It depends on Mg(2+) as a cofactor.

It catalyses the reaction 8 isopentenyl diphosphate + (2E,6E)-farnesyl diphosphate = di-trans,octa-cis-undecaprenyl diphosphate + 8 diphosphate. In terms of biological role, catalyzes the sequential condensation of isopentenyl diphosphate (IPP) with (2E,6E)-farnesyl diphosphate (E,E-FPP) to yield (2Z,6Z,10Z,14Z,18Z,22Z,26Z,30Z,34E,38E)-undecaprenyl diphosphate (di-trans,octa-cis-UPP). UPP is the precursor of glycosyl carrier lipid in the biosynthesis of bacterial cell wall polysaccharide components such as peptidoglycan and lipopolysaccharide. This Shigella flexneri protein is Ditrans,polycis-undecaprenyl-diphosphate synthase ((2E,6E)-farnesyl-diphosphate specific).